The chain runs to 353 residues: tRNA-specific 2-thiouridylase MnmA 2 (353 aa).

Residues alanine 9–serine 16 and methionine 35 each bind ATP. Cysteine 98 functions as the Nucleophile in the catalytic mechanism. A disulfide bond links cysteine 98 and cysteine 194. Glycine 122 lines the ATP pocket. Residues lysine 144–glutamine 146 form an interaction with tRNA region. The Cysteine persulfide intermediate role is filled by cysteine 194. Residues arginine 300–tyrosine 301 form an interaction with tRNA region.

The protein belongs to the MnmA/TRMU family.

The protein localises to the cytoplasm. It catalyses the reaction S-sulfanyl-L-cysteinyl-[protein] + uridine(34) in tRNA + AH2 + ATP = 2-thiouridine(34) in tRNA + L-cysteinyl-[protein] + A + AMP + diphosphate + H(+). In terms of biological role, catalyzes the 2-thiolation of uridine at the wobble position (U34) of tRNA, leading to the formation of s(2)U34. This Clostridium botulinum (strain ATCC 19397 / Type A) protein is tRNA-specific 2-thiouridylase MnmA 2.